A 700-amino-acid polypeptide reads, in one-letter code: Calpain-2 catalytic subunit (700 aa).

Alanine 2 is subject to N-acetylalanine. Residues 2–19 constitute a propeptide, anchors to the small subunit; the sequence is AGIAIKLAKDREAAEGLG. Residues 45 to 344 form the Calpain catalytic domain; the sequence is LFQDPSFPAL…YSRLEICNLT (300 aa). Residues isoleucine 89, glycine 91, and aspartate 96 each contribute to the Ca(2+) site. Cysteine 105 is an active-site residue. Positions 175, 229, and 230 each coordinate Ca(2+). Residues histidine 262 and asparagine 286 contribute to the active site. Ca(2+) contacts are provided by glutamate 292, aspartate 299, glutamine 319, and glutamate 323. The tract at residues 345–514 is domain III; the sequence is PDTLTCDSYK…KKADYQAVDD (170 aa). The tract at residues 515–529 is linker; the sequence is EIEANIEEIDANEED. A domain IV region spans residues 530 to 700; the sequence is IDDGFRRLFV…LASWLSFSVL (171 aa). Residues alanine 542, aspartate 545, glutamate 547, glutamate 552, aspartate 585, aspartate 587, serine 589, lysine 591, glutamate 596, aspartate 615, aspartate 617, serine 619, threonine 621, glutamate 626, aspartate 658, and asparagine 661 each coordinate Ca(2+). EF-hand domains follow at residues 572-605 and 602-637; these read FSIE…TKIQ and TKIQ…AGFK.

It belongs to the peptidase C2 family. In terms of assembly, forms a heterodimer with a small (regulatory) subunit (CAPNS1). Interacts with CPEB3; this leads to cleavage of CPEB3. It depends on Ca(2+) as a cofactor. In terms of tissue distribution, ubiquitous.

The protein localises to the cytoplasm. Its subcellular location is the cell membrane. It carries out the reaction Broad endopeptidase specificity.. With respect to regulation, activated by 200-1000 micromolar concentrations of calcium and inhibited by calpastatin. Calcium-regulated non-lysosomal thiol-protease which catalyzes limited proteolysis of substrates involved in cytoskeletal remodeling and signal transduction. Proteolytically cleaves MYOC at 'Arg-226'. Proteolytically cleaves CPEB3 following neuronal stimulation which abolishes CPEB3 translational repressor activity, leading to translation of CPEB3 target mRNAs. The polypeptide is Calpain-2 catalytic subunit (Capn2) (Mus musculus (Mouse)).